The chain runs to 114 residues: Eukaryotic translation initiation factor 6 (114 aa).

It belongs to the eIF-6 family. As to quaternary structure, monomer. Associates with the 60S ribosomal subunit.

It is found in the cytoplasm. It localises to the nucleus. Its subcellular location is the nucleolus. In terms of biological role, binds to the 60S ribosomal subunit and prevents its association with the 40S ribosomal subunit to form the 80S initiation complex in the cytoplasm. May also be involved in ribosome biogenesis. This is Eukaryotic translation initiation factor 6 from Trypanosoma cruzi.